The primary structure comprises 34 residues: Photosystem II reaction center protein T (34 aa).

The helical transmembrane segment at Ala-3–Phe-23 threads the bilayer.

This sequence belongs to the PsbT family. PSII is composed of 1 copy each of membrane proteins PsbA, PsbB, PsbC, PsbD, PsbE, PsbF, PsbH, PsbI, PsbJ, PsbK, PsbL, PsbM, PsbT, PsbY, PsbZ, Psb30/Ycf12, at least 3 peripheral proteins of the oxygen-evolving complex and a large number of cofactors. It forms dimeric complexes.

The protein localises to the plastid. The protein resides in the chloroplast thylakoid membrane. In terms of biological role, found at the monomer-monomer interface of the photosystem II (PS II) dimer, plays a role in assembly and dimerization of PSII. PSII is a light-driven water plastoquinone oxidoreductase, using light energy to abstract electrons from H(2)O, generating a proton gradient subsequently used for ATP formation. The chain is Photosystem II reaction center protein T from Klebsormidium bilatum (Filamentous green alga).